A 497-amino-acid chain; its full sequence is Dol-P-Man:Man(7)GlcNAc(2)-PP-Dol alpha-1,6-mannosyltransferase (497 aa).

Transmembrane regions (helical) follow at residues 10–30 (FLQS…YVVM), 71–91 (FIGA…ISCL), 92–112 (GFPK…IILS), 125–145 (FGNQ…HFLF), 154–174 (ILAL…NFYP), 178–198 (FLIF…GPIG), and 215–235 (YCVG…SIMW). Residue asparagine 253 is glycosylated (N-linked (GlcNAc...) asparagine). 4 helical membrane passes run 263-285 (IHWY…SLLG), 292-312 (VPFF…LPHK), 316-336 (FIIS…SRIY), and 346-366 (LVNM…VVTF). Asparagine 435 carries an N-linked (GlcNAc...) asparagine glycan.

Belongs to the glycosyltransferase 22 family.

It localises to the endoplasmic reticulum membrane. The catalysed reaction is an alpha-D-Man-(1-&gt;2)-alpha-D-Man-(1-&gt;2)-alpha-D-Man-(1-&gt;3)-[alpha-D-Man-(1-&gt;2)-alpha-D-Man-(1-&gt;3)-alpha-D-Man-(1-&gt;6)]-beta-D-Man-(1-&gt;4)-beta-D-GlcNAc-(1-&gt;4)-alpha-D-GlcNAc-diphospho-di-trans,poly-cis-dolichol + a di-trans,poly-cis-dolichyl beta-D-mannosyl phosphate = an alpha-D-Man-(1-&gt;2)-alpha-D-Man-(1-&gt;2)-alpha-D-Man-(1-&gt;3)-[alpha-D-Man-(1-&gt;2)-alpha-D-Man-(1-&gt;3)-[alpha-D-Man-(1-&gt;6)]-alpha-D-Man-(1-&gt;6)]-beta-D-Man-(1-&gt;4)-beta-D-GlcNAc-(1-&gt;4)-alpha-D-GlcNAc-diphospho-di-trans,poly-cis-dolichol + a di-trans,poly-cis-dolichyl phosphate + H(+). Its pathway is protein modification; protein glycosylation. In terms of biological role, mannosyltransferase that operates in the biosynthetic pathway of dolichol-linked oligosaccharides, the glycan precursors employed in protein asparagine (N)-glycosylation. The assembly of dolichol-linked oligosaccharides begins on the cytosolic side of the endoplasmic reticulum membrane and finishes in its lumen. The sequential addition of sugars to dolichol pyrophosphate produces dolichol-linked oligosaccharides containing fourteen sugars, including two GlcNAcs, nine mannoses and three glucoses. Once assembled, the oligosaccharide is transferred from the lipid to nascent proteins by oligosaccharyltransferases. In the lumen of the endoplasmic reticulum, adds the eighth mannose residue in an alpha-1,6 linkage onto Man(7)GlcNAc(2)-PP-dolichol to produce Man(8)GlcNAc(2)-PP-dolichol. The polypeptide is Dol-P-Man:Man(7)GlcNAc(2)-PP-Dol alpha-1,6-mannosyltransferase (ALG12) (Arabidopsis thaliana (Mouse-ear cress)).